The sequence spans 36 residues: Amanexitide proprotein 2 (36 aa).

A propeptide spanning residues Met1–Pro10 is cleaved from the precursor. The cyclopeptide (Val-Pro) cross-link spans Val11–Pro19. Positions Phe20–Cys36 are excised as a propeptide.

The protein belongs to the MSDIN fungal toxin family. In terms of processing, processed by the macrocyclase-peptidase enzyme POPB to yield a toxic cyclic nonapeptide. POPB first removes 10 residues from the N-terminus. Conformational trapping of the remaining peptide forces the enzyme to release this intermediate rather than proceed to macrocyclization. The enzyme rebinds the remaining peptide in a different conformation and catalyzes macrocyclization of the N-terminal 9 residues. Expressed in basidiocarps.

Functionally, cyclic nonapeptide that belongs to the MSDIN-like toxin family responsible for a large number of food poisoning cases and deaths. This chain is Amanexitide proprotein 2, found in Amanita exitialis (Guangzhou destroying angel).